The chain runs to 361 residues: Histidine biosynthesis bifunctional protein HisB (361 aa).

Positions 1–172 are histidinol-phosphatase; that stretch reads MSQPTLFIDR…PKTTACERPP (172 aa). Asp-9 (nucleophile) is an active-site residue. The Mg(2+) site is built by Asp-9 and Asp-11. The Proton donor role is filled by Asp-11. The Zn(2+) site is built by Cys-92, His-94, Cys-100, and Cys-102. Asp-129 contributes to the Mg(2+) binding site. Positions 173–361 are imidazoleglycerol-phosphate dehydratase; it reads RYAEVVRTTK…NELPSSKGVL (189 aa).

In the N-terminal section; belongs to the histidinol-phosphatase family. It in the C-terminal section; belongs to the imidazoleglycerol-phosphate dehydratase family. Requires Mg(2+) as cofactor. The cofactor is Zn(2+).

The protein resides in the cytoplasm. It catalyses the reaction D-erythro-1-(imidazol-4-yl)glycerol 3-phosphate = 3-(imidazol-4-yl)-2-oxopropyl phosphate + H2O. The catalysed reaction is L-histidinol phosphate + H2O = L-histidinol + phosphate. Its pathway is amino-acid biosynthesis; L-histidine biosynthesis; L-histidine from 5-phospho-alpha-D-ribose 1-diphosphate: step 6/9. The protein operates within amino-acid biosynthesis; L-histidine biosynthesis; L-histidine from 5-phospho-alpha-D-ribose 1-diphosphate: step 8/9. This chain is Histidine biosynthesis bifunctional protein HisB, found in Actinobacillus pleuropneumoniae serotype 7 (strain AP76).